A 307-amino-acid chain; its full sequence is Ribosomal RNA small subunit methyltransferase H (307 aa).

Residues 32–34 (GGH), D52, F78, D99, and Q106 each bind S-adenosyl-L-methionine.

The protein belongs to the methyltransferase superfamily. RsmH family.

It localises to the cytoplasm. It carries out the reaction cytidine(1402) in 16S rRNA + S-adenosyl-L-methionine = N(4)-methylcytidine(1402) in 16S rRNA + S-adenosyl-L-homocysteine + H(+). Functionally, specifically methylates the N4 position of cytidine in position 1402 (C1402) of 16S rRNA. In Acinetobacter baumannii (strain SDF), this protein is Ribosomal RNA small subunit methyltransferase H.